The chain runs to 195 residues: Shikimate kinase (195 aa).

21 to 26 (GTGKTS) is a binding site for ATP. Threonine 25 lines the Mg(2+) pocket. Positions 43, 67, and 89 each coordinate substrate. The interval 128–148 (REQRPSFSGKASTEISEETMR) is disordered. An ATP-binding site is contributed by arginine 131. Residues 132–141 (PSFSGKASTE) show a composition bias toward polar residues. Arginine 158 contacts substrate.

Belongs to the shikimate kinase family. Monomer. Mg(2+) serves as cofactor.

It localises to the cytoplasm. The catalysed reaction is shikimate + ATP = 3-phosphoshikimate + ADP + H(+). Its pathway is metabolic intermediate biosynthesis; chorismate biosynthesis; chorismate from D-erythrose 4-phosphate and phosphoenolpyruvate: step 5/7. Functionally, catalyzes the specific phosphorylation of the 3-hydroxyl group of shikimic acid using ATP as a cosubstrate. The chain is Shikimate kinase from Syntrophus aciditrophicus (strain SB).